Here is a 224-residue protein sequence, read N- to C-terminus: Thylakoid lumenal 15 kDa protein 1, chloroplastic (224 aa).

The N-terminal 34 residues, 1–34 (MVILSNVSLFSCCNISQKPSLFSPSSRSSHCPIR), are a transit peptide targeting the chloroplast. Residues 35–81 (CSQSQEGKEVVTSPLRSVVWSLGEEVSKRSLFALVSASLFFVDPALA) constitute a thylakoid transit peptide. Pentapeptide repeat domains lie at 116 to 155 (SILRQANFKGAKLLGASFFDADLTGADLSEADLRGADFSL) and 156 to 196 (ANVT…PLRD).

The protein localises to the plastid. It is found in the chloroplast thylakoid lumen. The protein is Thylakoid lumenal 15 kDa protein 1, chloroplastic of Arabidopsis thaliana (Mouse-ear cress).